A 197-amino-acid chain; its full sequence is Phosphoheptose isomerase (197 aa).

The SIS domain maps to 34-196 (MVQCLLGGNK…DRTLFPQDEQ (163 aa)). 49 to 51 (NGG) is a substrate binding site. The Zn(2+) site is built by H58 and E62. Substrate-binding positions include E62, 91–92 (ND), 117–119 (STS), S122, and Q172. Residues Q172 and H180 each coordinate Zn(2+).

It belongs to the SIS family. GmhA subfamily. Homotetramer. Zn(2+) serves as cofactor.

It localises to the cytoplasm. It catalyses the reaction 2 D-sedoheptulose 7-phosphate = D-glycero-alpha-D-manno-heptose 7-phosphate + D-glycero-beta-D-manno-heptose 7-phosphate. Its pathway is carbohydrate biosynthesis; D-glycero-D-manno-heptose 7-phosphate biosynthesis; D-glycero-alpha-D-manno-heptose 7-phosphate and D-glycero-beta-D-manno-heptose 7-phosphate from sedoheptulose 7-phosphate: step 1/1. Its function is as follows. Catalyzes the isomerization of sedoheptulose 7-phosphate in D-glycero-D-manno-heptose 7-phosphate. This Shewanella frigidimarina (strain NCIMB 400) protein is Phosphoheptose isomerase.